Consider the following 647-residue polypeptide: Neutral endopeptidase (647 aa).

In terms of domain architecture, Peptidase M13 spans M1–W647. H496 contacts Zn(2+). E497 is a catalytic residue. Zn(2+) is bound by residues H500 and E556. D560 (proton donor) is an active-site residue.

The protein belongs to the peptidase M13 family. It depends on Zn(2+) as a cofactor.

The chain is Neutral endopeptidase (pepO) from Lactobacillus helveticus (Lactobacillus suntoryeus).